The sequence spans 310 residues: Protoheme IX farnesyltransferase (310 aa).

A run of 9 helical transmembrane segments spans residues 31-51, 52-72, 102-119, 123-145, 151-171, 179-199, 225-245, 248-268, and 281-301; these read VMSL…DSIH, PLIA…AGAM, ALSF…FMAL, ILAS…IWLK, NIVI…AAVS, IILF…IALF, ILIY…IGMN, IYLI…FSLF, and FTYS…TSTI.

The protein belongs to the UbiA prenyltransferase family. Protoheme IX farnesyltransferase subfamily.

It is found in the cell inner membrane. The catalysed reaction is heme b + (2E,6E)-farnesyl diphosphate + H2O = Fe(II)-heme o + diphosphate. Its pathway is porphyrin-containing compound metabolism; heme O biosynthesis; heme O from protoheme: step 1/1. Functionally, converts heme B (protoheme IX) to heme O by substitution of the vinyl group on carbon 2 of heme B porphyrin ring with a hydroxyethyl farnesyl side group. The chain is Protoheme IX farnesyltransferase from Rickettsia prowazekii (strain Madrid E).